A 295-amino-acid chain; its full sequence is ATP synthase gamma chain (295 aa).

Belongs to the ATPase gamma chain family. In terms of assembly, F-type ATPases have 2 components, CF(1) - the catalytic core - and CF(0) - the membrane proton channel. CF(1) has five subunits: alpha(3), beta(3), gamma(1), delta(1), epsilon(1). CF(0) has three main subunits: a, b and c.

The protein localises to the cell inner membrane. In terms of biological role, produces ATP from ADP in the presence of a proton gradient across the membrane. The gamma chain is believed to be important in regulating ATPase activity and the flow of protons through the CF(0) complex. The chain is ATP synthase gamma chain from Aliarcobacter butzleri (strain RM4018) (Arcobacter butzleri).